The primary structure comprises 179 residues: Large ribosomal subunit protein uL5c (179 aa).

This sequence belongs to the universal ribosomal protein uL5 family. As to quaternary structure, part of the 50S ribosomal subunit; contacts the 5S rRNA.

It localises to the plastid. Its subcellular location is the chloroplast. Functionally, binds 5S rRNA, forms part of the central protuberance of the 50S subunit. The chain is Large ribosomal subunit protein uL5c (rpl5) from Euglena gracilis.